The primary structure comprises 205 residues: Adenylyl-sulfate kinase (205 aa).

An ATP-binding site is contributed by Gly31–Ser38. Residue Ser105 is the Phosphoserine intermediate of the active site.

The protein belongs to the APS kinase family.

The enzyme catalyses adenosine 5'-phosphosulfate + ATP = 3'-phosphoadenylyl sulfate + ADP + H(+). It functions in the pathway sulfur metabolism; hydrogen sulfide biosynthesis; sulfite from sulfate: step 2/3. In terms of biological role, catalyzes the synthesis of activated sulfate. In Shewanella baltica (strain OS223), this protein is Adenylyl-sulfate kinase.